The sequence spans 480 residues: Cytochrome b-c1 complex subunit 1, mitochondrial (480 aa).

The N-terminal 34 residues, 1-34, are a transit peptide targeting the mitochondrion; the sequence is MAASAVCRAAGAGTRVLLRTRRSPALLRSSDLRG. An N6-acetyllysine mark is found at Lys-111 and Lys-138. An N6-acetyllysine; alternate modification is found at Lys-163. Lys-163 carries the post-translational modification N6-succinyllysine; alternate. Phosphoserine is present on Ser-212. Lys-248 carries the post-translational modification N6-acetyllysine.

Belongs to the peptidase M16 family. UQCRC1/QCR1 subfamily. In terms of assembly, component of the ubiquinol-cytochrome c oxidoreductase (cytochrome b-c1 complex, complex III, CIII), a multisubunit enzyme composed of 11 subunits. The complex is composed of 3 respiratory subunits cytochrome b, cytochrome c1 and Rieske protein UQCRFS1, 2 core protein subunits UQCRC1/QCR1 and UQCRC2/QCR2, and 6 low-molecular weight protein subunits UQCRH/QCR6, UQCRB/QCR7, UQCRQ/QCR8, UQCR10/QCR9, UQCR11/QCR10 and subunit 9, the cleavage product of Rieske protein UQCRFS1. The complex exists as an obligatory dimer and forms supercomplexes (SCs) in the inner mitochondrial membrane with NADH-ubiquinone oxidoreductase (complex I, CI) and cytochrome c oxidase (complex IV, CIV), resulting in different assemblies (supercomplex SCI(1)III(2)IV(1) and megacomplex MCI(2)III(2)IV(2)). Interacts with UQCC6. Interacts with STMP1.

It localises to the mitochondrion inner membrane. Functionally, component of the ubiquinol-cytochrome c oxidoreductase, a multisubunit transmembrane complex that is part of the mitochondrial electron transport chain which drives oxidative phosphorylation. The respiratory chain contains 3 multisubunit complexes succinate dehydrogenase (complex II, CII), ubiquinol-cytochrome c oxidoreductase (cytochrome b-c1 complex, complex III, CIII) and cytochrome c oxidase (complex IV, CIV), that cooperate to transfer electrons derived from NADH and succinate to molecular oxygen, creating an electrochemical gradient over the inner membrane that drives transmembrane transport and the ATP synthase. The cytochrome b-c1 complex catalyzes electron transfer from ubiquinol to cytochrome c, linking this redox reaction to translocation of protons across the mitochondrial inner membrane, with protons being carried across the membrane as hydrogens on the quinol. In the process called Q cycle, 2 protons are consumed from the matrix, 4 protons are released into the intermembrane space and 2 electrons are passed to cytochrome c. The 2 core subunits UQCRC1/QCR1 and UQCRC2/QCR2 are homologous to the 2 mitochondrial-processing peptidase (MPP) subunits beta-MPP and alpha-MPP respectively, and they seem to have preserved their MPP processing properties. May be involved in the in situ processing of UQCRFS1 into the mature Rieske protein and its mitochondrial targeting sequence (MTS)/subunit 9 when incorporated into complex III. Seems to play an important role in the maintenance of proper mitochondrial function in nigral dopaminergic neurons. The protein is Cytochrome b-c1 complex subunit 1, mitochondrial (UQCRC1) of Bos taurus (Bovine).